We begin with the raw amino-acid sequence, 345 residues long: Uroporphyrinogen decarboxylase (345 aa).

Substrate contacts are provided by residues 27 to 31 (RQAGR), Phe-46, Asp-76, Tyr-152, Ser-207, and His-320.

Belongs to the uroporphyrinogen decarboxylase family. As to quaternary structure, homodimer.

It localises to the cytoplasm. The catalysed reaction is uroporphyrinogen III + 4 H(+) = coproporphyrinogen III + 4 CO2. Its pathway is porphyrin-containing compound metabolism; protoporphyrin-IX biosynthesis; coproporphyrinogen-III from 5-aminolevulinate: step 4/4. Its function is as follows. Catalyzes the decarboxylation of four acetate groups of uroporphyrinogen-III to yield coproporphyrinogen-III. The sequence is that of Uroporphyrinogen decarboxylase from Geobacillus sp. (strain WCH70).